The chain runs to 475 residues: Tryptophan synthase beta chain 2, chloroplastic (475 aa).

Polar residues predominate over residues 1-21; it reads MATASTAATFRPSSVSASSEL. The segment at 1-44 is disordered; it reads MATASTAATFRPSSVSASSELTHLRSPSKLPKFTPLPSARSRSS. The N-terminal 51 residues, 1 to 51, are a transit peptide targeting the chloroplast; that stretch reads MATASTAATFRPSSVSASSELTHLRSPSKLPKFTPLPSARSRSSSSFSVSC. Position 52 is an N-acetylthreonine (Thr52). An N6-(pyridoxal phosphate)lysine modification is found at Lys170.

Belongs to the TrpB family. In terms of assembly, tetramer of two alpha and two beta chains. Requires pyridoxal 5'-phosphate as cofactor.

Its subcellular location is the plastid. It is found in the chloroplast. It catalyses the reaction (1S,2R)-1-C-(indol-3-yl)glycerol 3-phosphate + L-serine = D-glyceraldehyde 3-phosphate + L-tryptophan + H2O. It functions in the pathway amino-acid biosynthesis; L-tryptophan biosynthesis; L-tryptophan from chorismate: step 5/5. In terms of biological role, the beta subunit is responsible for the synthesis of L-tryptophan from indole and L-serine. This chain is Tryptophan synthase beta chain 2, chloroplastic (TSB2), found in Arabidopsis thaliana (Mouse-ear cress).